Here is a 147-residue protein sequence, read N- to C-terminus: Hemoglobin subunit beta (147 aa).

At Val2 the chain carries N-acetylvaline. Positions 3-147 (HLTPEEKNAV…VANALAHKYH (145 aa)) constitute a Globin domain. Thr13 bears the Phosphothreonine mark. A Phosphoserine modification is found at Ser45. N6-acetyllysine is present on Lys60. Residue His64 participates in heme b binding. Residue Lys83 is modified to N6-acetyllysine. His93 is a binding site for heme b. At Cys94 the chain carries S-nitrosocysteine. Lys145 bears the N6-acetyllysine mark.

Belongs to the globin family. Heterotetramer of two alpha chains and two beta chains. As to expression, red blood cells.

In terms of biological role, involved in oxygen transport from the lung to the various peripheral tissues. This chain is Hemoglobin subunit beta (HBB), found in Papio anubis (Olive baboon).